The primary structure comprises 124 residues: Sulfiredoxin (124 aa).

The protein belongs to the sulfiredoxin family. As to quaternary structure, interacts with tpx1 in response to oxidative stress.

The protein localises to the cytoplasm. It is found in the nucleus. It carries out the reaction S-hydroxy-S-oxy-L-cysteinyl-[peroxiredoxin] + [protein]-dithiol + ATP = S-hydroxy-L-cysteinyl-[peroxiredoxin] + [protein]-disulfide + ADP + phosphate. Contributes to oxidative stress resistance by reducing cysteine-sulfinic acid formed under exposure to oxidants in a peroxiredoxin. May catalyze the reduction in a multi-step process by acting both as a specific phosphotransferase and a thioltransferase. This is Sulfiredoxin (srx1) from Schizosaccharomyces pombe (strain 972 / ATCC 24843) (Fission yeast).